The primary structure comprises 121 residues: Small ribosomal subunit protein uS13 (121 aa).

The segment at 91–121 (HRRGLPVRGQNTKNNARTRKGPSKTVAGKKK) is disordered. A compositionally biased stretch (basic residues) spans 106–121 (ARTRKGPSKTVAGKKK).

It belongs to the universal ribosomal protein uS13 family. As to quaternary structure, part of the 30S ribosomal subunit. Forms a loose heterodimer with protein S19. Forms two bridges to the 50S subunit in the 70S ribosome.

In terms of biological role, located at the top of the head of the 30S subunit, it contacts several helices of the 16S rRNA. In the 70S ribosome it contacts the 23S rRNA (bridge B1a) and protein L5 of the 50S subunit (bridge B1b), connecting the 2 subunits; these bridges are implicated in subunit movement. Contacts the tRNAs in the A and P-sites. This chain is Small ribosomal subunit protein uS13, found in Listeria monocytogenes serotype 4b (strain CLIP80459).